Here is a 299-residue protein sequence, read N- to C-terminus: Leucine zipper transcription factor-like protein 1 (299 aa).

A coiled-coil region spans residues 96-299 (LKLQTDISEL…KRLAKYESED (204 aa)). Residues 145–299 (GTTELLNKEI…KRLAKYESED (155 aa)) form an interaction with BSS9 region.

The protein belongs to the LZTFL1 family. Self-associates. Interacts with BBS9; the interaction mediates the association of LZTL1 with the BBsome complex and regulates BBSome ciliary trafficking. In terms of tissue distribution, highly expressed in testis. Expressed in brain, cerebellum, eye, heart, kidney, liver, lung and trachea. In small intestine, graded expression along the crypt-villus axis with high levels in the villus apex and lower levels in the crypt stem cells (at protein level). Not expressed in skeletal muscle and white adipose tissue.

The protein localises to the cytoplasm. In terms of biological role, regulates ciliary localization of the BBSome complex. Together with the BBSome complex, controls SMO ciliary trafficking and contributes to the sonic hedgehog (SHH) pathway regulation. May play a role in neurite outgrowth. May have tumor suppressor function. This Mus musculus (Mouse) protein is Leucine zipper transcription factor-like protein 1 (Lztfl1).